The primary structure comprises 355 residues: Phenylalanine--tRNA ligase alpha subunit (355 aa).

E273 is a binding site for Mg(2+).

The protein belongs to the class-II aminoacyl-tRNA synthetase family. Phe-tRNA synthetase alpha subunit type 1 subfamily. As to quaternary structure, tetramer of two alpha and two beta subunits. It depends on Mg(2+) as a cofactor.

The protein localises to the cytoplasm. The catalysed reaction is tRNA(Phe) + L-phenylalanine + ATP = L-phenylalanyl-tRNA(Phe) + AMP + diphosphate + H(+). The chain is Phenylalanine--tRNA ligase alpha subunit from Bifidobacterium longum subsp. infantis (strain ATCC 15697 / DSM 20088 / JCM 1222 / NCTC 11817 / S12).